Here is a 45-residue protein sequence, read N- to C-terminus: FKBP-type peptidyl-prolyl cis-trans isomerase, chloroplastic (45 aa).

The protein belongs to the FKBP-type PPIase family. In terms of tissue distribution, expressed in leaves, but not in roots.

The protein localises to the plastid. It is found in the chloroplast thylakoid lumen. It carries out the reaction [protein]-peptidylproline (omega=180) = [protein]-peptidylproline (omega=0). In terms of biological role, PPIases accelerate the folding of proteins. It catalyzes the cis-trans isomerization of proline imidic peptide bonds in oligopeptides. This is FKBP-type peptidyl-prolyl cis-trans isomerase, chloroplastic from Vicia faba (Broad bean).